The sequence spans 210 residues: MSFGTLYTHNPTPRSTTLIALAKLHNLDVKIIHAEKKNKEAFEELCRYNPLGQVPTFVGADGFVLSECIPLTLYCNDERSSLRILQWMSFANSDLFPAVGGVFLPRIGQRQIIQQDDGDSLRAMLQRCKYLDEHLKRSRYLVGESITIADFFAASLLMGAFAAFRRSMQERFGALCSWYDGVLEIGWFKKVAGGVPDLGLELEIPEDIKW.

The region spanning S2–R83 is the GST N-terminal domain. One can recognise a GST C-terminal domain in the interval D77 to L200.

Belongs to the GST superfamily.

It functions in the pathway secondary metabolite biosynthesis. Its function is as follows. Glutathione S-transferase; part of the gene cluster that mediates the biosynthesis of monodictyphenone, a prenyl xanthone derivative. The pathway begins with the synthesis of atrochrysone thioester by the polyketide synthase (PKS) mdpG. The atrochrysone carboxyl ACP thioesterase mdpF then breaks the thioester bond and releases the atrochrysone carboxylic acid from mdpG. The atrochrysone carboxylic acid is then converted to atrochrysone which is further transformed into emodin anthrone. The next step is performed by the anthrone oxygenase mdpH that catalyzes the oxidation of emodinanthrone to emodin. Emodin is further modified to yield monodictyphenone via several steps involving mdpB, mdpC mdpJ, mdpK and mdpL. These enzymes with xptA, xptB and xptC are also proposed to be involved in the synthesis of shamixanthone from emodin. Especially, direct reduction of emodin by the short chain dehydrogenase mdpC followed by dehydration catalyzed by the scytalone dehydratase-like protein mdpB gives loss of oxygen and formation of chrysophanol intermediate in two simple steps. This chain is Glutathione S-transferase mdpJ, found in Emericella nidulans (strain FGSC A4 / ATCC 38163 / CBS 112.46 / NRRL 194 / M139) (Aspergillus nidulans).